The chain runs to 1322 residues: Myosin-1 (1322 aa).

The region spanning 42–728 is the Myosin motor domain; that stretch reads AGVSDMTLLT…TLFALETMRD (687 aa). Residue 135-142 coordinates ATP; that stretch reads GESGAGKT. The residue at position 369 (S369) is a Phosphoserine. The interval 417–499 is actin-binding; it reads VIGVLDIYGF…PGIFSALNDA (83 aa). 2 IQ domains span residues 732-752 and 753-778; these read HNMA…REES and ARRI…YGHQ. In terms of domain architecture, TH1 spans 786–980; that stretch reads RRRFSLISMR…SGEPPTSVSR (195 aa). 2 disordered regions span residues 966–1090 and 1137–1162; these read IVSV…MPSY and VQQL…ATPA. 2 stretches are compositionally biased toward low complexity: residues 1000–1017 and 1027–1056; these read SRPV…PTTT and GGTA…ASGA. 2 stretches are compositionally biased toward polar residues: residues 1078 to 1087 and 1137 to 1148; these read PATSAPSSGM and VQQLGSSSTAQT. One can recognise an SH3 domain in the interval 1184–1243; it reads RRLPRYRALYDFETQEAGELPLRTGDIVELEEKEENGWWLVKKGSTEGWSPADYLELIAE. Residues 1246–1300 form a disordered region; it reads AAKPRPPPPAKPASAKPAAAPARVSQSSVTSSWTPPDSHAAPVAVMPGMGDPGGF. A compositionally biased stretch (low complexity) spans 1257-1267; the sequence is PASAKPAAAPA. Positions 1269–1280 are enriched in polar residues; sequence VSQSSVTSSWTP.

This sequence belongs to the TRAFAC class myosin-kinesin ATPase superfamily. Myosin family. Phosphorylation of the TEDS site (Ser-369) is required for the polarization of the actin cytoskeleton. Phosphorylation probably activates the myosin-I ATPase activity.

Its subcellular location is the cytoplasm. It localises to the cytoskeleton. The protein resides in the actin patch. Type-I myosin implicated in the organization of the actin cytoskeleton. Required for proper actin cytoskeleton polarization. At the cell cortex, assembles in patch-like structures together with proteins from the actin-polymerizing machinery and promotes actin assembly. Functions as actin nucleation-promoting factor (NPF) for the Arp2/3 complex. The sequence is that of Myosin-1 (MYO1) from Malassezia globosa (strain ATCC MYA-4612 / CBS 7966) (Dandruff-associated fungus).